Reading from the N-terminus, the 1172-residue chain is MKIEELIIDGFKSYAVRTVISNWDDQFNAITGLNGSGKSNILDAICFVLGITNMSTVRAQNLQDLIYKRGQAGITRASVTIVFNNRDPASSPIGFENHPQVSVTRQIIMGGTSKYLINGHRALQQNVQNLFQSVQLNINNPNFLIMQGRITKVLNMKATEILSMIEEASGTRMFEERKEKAFRTMQRKEAKVEEINTLLREEIEPRLTKLRTEKKTFLEYQHIYNDLERLSHLCTAYDYYKLSLKVEELTVQASQKHSHIAEMESSLQTSKQEVLILKEKIKKIEDERMRQMSVSSDRTLDSQLQTVNENITRISTSIELKNTALEEEHGDLQQIRGKAKELETLLRGKRKRLDEVLSVYEKRKDEHQSISKDFKSQEELISSLTTGLSTTEGHETGYSRKLHEARDTLNDFKAEKETNRLKLEGLNKQISLTKPKKAEATKRCDQLNREIDILQNHVEKLKMSLKNTNSDITGEDVLQQKLKQLAKDRGNLLNELDALKSKLAYMEFTYTDPTPNFDRSKVKGLVAQLLTLNEENYDKQTALEITAGGRLYNLIVETEKIGAQLLQKGNLKRRVTIIPLNKITSFVASAERVGAAKKISNNKAQLALELIGYDDELLPAMQYVFGSTLVCDTPESAKKVTFHPSVKLKSVTLDGDVYDPSGTLTGGSVNKSAGPLLQIQKLNSLQLKLQVVTSEYEKLETQLKDLKTQNANFHRLEQEIQLKQHELTLLIEQRETDSSFRLLSDYQQYKDDVKDLKQRLPELDRLILQSDQAIKKIERDMQEWKHNKGSKMAELEKEFNQYKHKLDEFTPILEKSENDYNGVKLECEQLEGELQNHQQSLVQGESTTSLIKTEIAELELSLVNEEHNRKKLTELIEIESAKFSGLNKEIDSLSTSMKTFESEINNGELTIQKLNHEFDRLEREKSVAITAINHLEKENDWIDGQKQHFGKQGTIFDFHSQNMRQCREQLHNLKPRFASMRKAINPKVMDMIDGVEKKEAKLRSMIKTIHRDKKKIQDTVKSIDRFKRSALEKTWREVNSSFGEIFDELLPGNSAELQPPENKEFTDGLEIHVKIGSIWKDSLAELSGGQRSLVALALIMSLLKYKPAPMYILDEIDAALDLSHTQNIGRLIKTKFKGSQFIIVSLKEGMFTNANRLFHVRFMDGSSVVQAR.

32–39 (GLNGSGKS) is an ATP binding site. Coiled coils occupy residues 172 to 204 (RMFE…EEIE) and 258 to 507 (SHIA…AYME). Residues 520 to 640 (SKVKGLVAQL…CDTPESAKKV (121 aa)) enclose the SMC hinge domain. A coiled-coil region spans residues 676-941 (LLQIQKLNSL…INHLEKENDW (266 aa)).

It belongs to the SMC family. SMC2 subfamily. As to quaternary structure, forms a heterodimer with cut3/smc4. Component of the condensin complex, which contains the cut3 and cut14 heterodimer, and three non smc subunits that probably regulate the complex: cnd1, cnd2 and cnd3.

It is found in the nucleus. The protein localises to the cytoplasm. It localises to the chromosome. Functionally, central component of the condensin complex, a complex required for conversion of interphase chromatin into mitotic-like condense chromosomes. The condensin complex probably introduces positive supercoils into relaxed DNA in the presence of type I topoisomerases and converts nicked DNA into positive knotted forms in the presence of type II topoisomerases. The polypeptide is Structural maintenance of chromosomes protein 2 (cut14) (Schizosaccharomyces pombe (strain 972 / ATCC 24843) (Fission yeast)).